The chain runs to 470 residues: Uronate isomerase (470 aa).

This sequence belongs to the metallo-dependent hydrolases superfamily. Uronate isomerase family.

The catalysed reaction is D-glucuronate = D-fructuronate. The enzyme catalyses aldehydo-D-galacturonate = keto-D-tagaturonate. Its pathway is carbohydrate metabolism; pentose and glucuronate interconversion. This is Uronate isomerase from Vibrio parahaemolyticus serotype O3:K6 (strain RIMD 2210633).